We begin with the raw amino-acid sequence, 438 residues long: Aspartate aminotransferase, cytoplasmic (438 aa).

The L-aspartate site is built by G73, W167, and N220. An N6-(pyridoxal phosphate)lysine modification is found at K284. R412 is a binding site for L-aspartate.

It belongs to the class-I pyridoxal-phosphate-dependent aminotransferase family. Homodimer. Pyridoxal 5'-phosphate is required as a cofactor.

It localises to the cytoplasm. The enzyme catalyses L-aspartate + 2-oxoglutarate = oxaloacetate + L-glutamate. Functionally, plays a key role in amino acid metabolism. The sequence is that of Aspartate aminotransferase, cytoplasmic (aatB) from Dictyostelium discoideum (Social amoeba).